The sequence spans 480 residues: Glutamyl-tRNA(Gln) amidotransferase subunit A (480 aa).

Active-site charge relay system residues include Lys-74 and Ser-149. Residue Ser-173 is the Acyl-ester intermediate of the active site.

The protein belongs to the amidase family. GatA subfamily. Heterotrimer of A, B and C subunits.

The enzyme catalyses L-glutamyl-tRNA(Gln) + L-glutamine + ATP + H2O = L-glutaminyl-tRNA(Gln) + L-glutamate + ADP + phosphate + H(+). Allows the formation of correctly charged Gln-tRNA(Gln) through the transamidation of misacylated Glu-tRNA(Gln) in organisms which lack glutaminyl-tRNA synthetase. The reaction takes place in the presence of glutamine and ATP through an activated gamma-phospho-Glu-tRNA(Gln). The polypeptide is Glutamyl-tRNA(Gln) amidotransferase subunit A (Ruthia magnifica subsp. Calyptogena magnifica).